Reading from the N-terminus, the 935-residue chain is Phosphoenolpyruvate carboxylase (935 aa).

Residues His-161 and Lys-593 contribute to the active site.

The protein belongs to the PEPCase type 1 family. Mg(2+) is required as a cofactor.

The enzyme catalyses oxaloacetate + phosphate = phosphoenolpyruvate + hydrogencarbonate. Functionally, forms oxaloacetate, a four-carbon dicarboxylic acid source for the tricarboxylic acid cycle. The polypeptide is Phosphoenolpyruvate carboxylase (Mycobacterium avium (strain 104)).